The chain runs to 90 residues: MNDSVKTSLKRTLVGRVVSNKMDKTVTVLIEHRVKHPIYGKYVVRSKKYHAHDEANTCNEGDLVEIQETRPVSKTKAWTVSRLVEAARVI.

It belongs to the universal ribosomal protein uS17 family. In terms of assembly, part of the 30S ribosomal subunit.

Its function is as follows. One of the primary rRNA binding proteins, it binds specifically to the 5'-end of 16S ribosomal RNA. The chain is Small ribosomal subunit protein uS17 from Burkholderia ambifaria (strain ATCC BAA-244 / DSM 16087 / CCUG 44356 / LMG 19182 / AMMD) (Burkholderia cepacia (strain AMMD)).